Here is a 652-residue protein sequence, read N- to C-terminus: Phosphoglucomutase 1, chloroplastic (652 aa).

The transit peptide at 1-84 (MAFSAAASAS…LAARRTLRVR (84 aa)) directs the protein to the chloroplast. The alpha-D-glucose 1,6-bisphosphate site is built by Arg118 and Ser211. The Phosphoserine intermediate role is filled by Ser211. Positions 211, 376, 378, and 380 each coordinate Mg(2+). At Ser211 the chain carries Phosphoserine. Alpha-D-glucose 1,6-bisphosphate-binding residues include Asp380, Arg381, Thr443, Glu462, Ser464, and Lys475.

The protein belongs to the phosphohexose mutase family. It depends on Mg(2+) as a cofactor.

It localises to the plastid. It is found in the chloroplast. The catalysed reaction is alpha-D-glucose 1-phosphate = alpha-D-glucose 6-phosphate. It catalyses the reaction O-phospho-L-seryl-[protein] + alpha-D-glucose 1-phosphate = alpha-D-glucose 1,6-bisphosphate + L-seryl-[protein]. It carries out the reaction alpha-D-glucose 1,6-bisphosphate + L-seryl-[protein] = O-phospho-L-seryl-[protein] + alpha-D-glucose 6-phosphate. With respect to regulation, inhibited by the Calvin cycle intermediates fructose-1,6-bisphosphate and ribulose-1,5-bisphosphate. In terms of biological role, catalyzes the reversible isomerization of alpha-D-glucose 1-phosphate to alpha-D-glucose 6-phosphate. The mechanism proceeds via the intermediate compound alpha-D-glucose 1,6-bisphosphate. This enzyme participates in both the breakdown and synthesis of glucose. Required for sucrose production and accumulation necessary during plant development. Promotes gravitropic responses, negative in shoots but positive in roots, by facilitating starch granules (statoliths) formation. This Marchantia polymorpha (Common liverwort) protein is Phosphoglucomutase 1, chloroplastic.